The primary structure comprises 272 residues: Acyl-[acyl-carrier-protein]--UDP-N-acetylglucosamine O-acyltransferase (272 aa).

This sequence belongs to the transferase hexapeptide repeat family. LpxA subfamily. Homotrimer.

The protein localises to the cytoplasm. The catalysed reaction is a (3R)-hydroxyacyl-[ACP] + UDP-N-acetyl-alpha-D-glucosamine = a UDP-3-O-[(3R)-3-hydroxyacyl]-N-acetyl-alpha-D-glucosamine + holo-[ACP]. It functions in the pathway glycolipid biosynthesis; lipid IV(A) biosynthesis; lipid IV(A) from (3R)-3-hydroxytetradecanoyl-[acyl-carrier-protein] and UDP-N-acetyl-alpha-D-glucosamine: step 1/6. In terms of biological role, involved in the biosynthesis of lipid A, a phosphorylated glycolipid that anchors the lipopolysaccharide to the outer membrane of the cell. This Rhizobium leguminosarum bv. trifolii (strain WSM2304) protein is Acyl-[acyl-carrier-protein]--UDP-N-acetylglucosamine O-acyltransferase.